The primary structure comprises 198 residues: Probable chemoreceptor glutamine deamidase CheD (198 aa).

It belongs to the CheD family.

The catalysed reaction is L-glutaminyl-[protein] + H2O = L-glutamyl-[protein] + NH4(+). Its function is as follows. Probably deamidates glutamine residues to glutamate on methyl-accepting chemotaxis receptors (MCPs), playing an important role in chemotaxis. The protein is Probable chemoreceptor glutamine deamidase CheD of Stenotrophomonas maltophilia (strain R551-3).